The chain runs to 704 residues: Phosphate acetyltransferase (704 aa).

Residues 379–704 (AFRYQVVQRA…AIQADAQAPA (326 aa)) are phosphate acetyltransferase.

The protein in the N-terminal section; belongs to the CobB/CobQ family. It in the C-terminal section; belongs to the phosphate acetyltransferase and butyryltransferase family. Homohexamer.

Its subcellular location is the cytoplasm. It carries out the reaction acetyl-CoA + phosphate = acetyl phosphate + CoA. It participates in metabolic intermediate biosynthesis; acetyl-CoA biosynthesis; acetyl-CoA from acetate: step 2/2. With respect to regulation, activity is increased under anaerobic growth conditions. Functionally, involved in acetate metabolism. In combination with LdhA and AckA, allows fermentation of pyruvate, enhancing long-term survival under anaerobic conditions. The chain is Phosphate acetyltransferase (pta) from Pseudomonas aeruginosa (strain ATCC 15692 / DSM 22644 / CIP 104116 / JCM 14847 / LMG 12228 / 1C / PRS 101 / PAO1).